The sequence spans 577 residues: External alternative NAD(P)H-ubiquinone oxidoreductase B1, mitochondrial (577 aa).

A mitochondrion-targeting transit peptide spans 1 to 35 (MRGFTYLSKVLHSHSSYSKLLVLCSVSTGGLLVYA). 57-87 (RVVVLGTGWGGTSFLKDVDISSYDVQVVSPR) contacts FAD. 221 to 257 (LHFVIVGGGPTGVEFAAELHDYVYEDLVKIYPSVKDF) contributes to the NAD(+) binding site. The region spanning 378 to 413 (KVMEDISTIFEAADKDDSGTLSVEEFRDVLEDIIIR) is the EF-hand domain. Ca(2+) is bound by residues Asp391, Asp393, Ser395, Thr397, and Glu402. The short motif at 568-577 (YIFGRDSSRI) is the Microbody targeting signal element.

Belongs to the NADH dehydrogenase family. The cofactor is FAD.

Its subcellular location is the mitochondrion inner membrane. The protein localises to the peroxisome. The catalysed reaction is a quinone + NADH + H(+) = a quinol + NAD(+). The enzyme catalyses a ubiquinone + NADH + H(+) = a ubiquinol + NAD(+). With respect to regulation, activity is calcium-dependent with a more pronounced effect at higher pH. Its function is as follows. Calcium-dependent NAD(P)H dehydrogenase. Binds calcium ions. Alternative NADH-ubiquinone oxidoreductase which catalyzes the oxidation of mitochondrial NADH does not translocate protons across the inner mitochondrial membrane. This Solanum tuberosum (Potato) protein is External alternative NAD(P)H-ubiquinone oxidoreductase B1, mitochondrial (NDB1).